The chain runs to 290 residues: Membrane protein insertase YidC 2 (290 aa).

An N-terminal signal peptide occupies residues 1 to 19 (MKKKALLPLFLGIMIFLAG). Cys20 carries N-palmitoyl cysteine lipidation. A lipid anchor (S-diacylglycerol cysteine) is attached at Cys20. 5 helical membrane passes run 56–76 (FGLA…PFML), 134–154 (MLGC…YFVL), 176–196 (PDIW…VVSS), 211–231 (MVIS…ALGL), and 232–252 (YWSV…IYYS). The segment at 266-290 (YEREHNPSSKKKGKNTQVVSKKNKK) is disordered. The span at 280-290 (NTQVVSKKNKK) shows a compositional bias: polar residues.

The protein belongs to the OXA1/ALB3/YidC family. Type 2 subfamily.

It is found in the cell membrane. Required for the insertion and/or proper folding and/or complex formation of integral membrane proteins into the membrane. Involved in integration of membrane proteins that insert both dependently and independently of the Sec translocase complex, as well as at least some lipoproteins. This Staphylococcus epidermidis (strain ATCC 35984 / DSM 28319 / BCRC 17069 / CCUG 31568 / BM 3577 / RP62A) protein is Membrane protein insertase YidC 2.